Consider the following 240-residue polypeptide: Axial regulator YABBY 3 (240 aa).

A C4-type zinc finger spans residues 30–57; the sequence is CSFCDTVLAVSVPPSSLFKTVTVRCGHC. Residues 135-156 form a disordered region; that stretch reads DHLQEMPRPPPANRPPEKRQRV.

The protein belongs to the YABBY family. Interacts with SPL/NZZ. Interacts with SPEAR2. Binds to LUG and LUH; these complexes promote adaxial cell identity in leaves as well as embryonic shoot apical meristem (SAM) initiation and postembryonic SAM maintenance. In terms of tissue distribution, expressed in abaxial regions of lateral aerial organ primordia leading to cotyledons, leaves, flower meristems, sepals, petals, stamen and carpels, but not in roots.

It is found in the nucleus. Involved in the abaxial cell fate determination during embryogenesis and organogenesis. Regulates the initiation of embryonic shoot apical meristem (SAM) development. Contributes to the repression of KNOX genes (STM, KNAT1/BP and KNAT2) to avoid ectopic meristems. Binds DNA without sequence specificity. The chain is Axial regulator YABBY 3 (YAB3) from Arabidopsis thaliana (Mouse-ear cress).